We begin with the raw amino-acid sequence, 196 residues long: Glycerol-3-phosphate acyltransferase (196 aa).

5 consecutive transmembrane segments (helical) span residues 1–21, 53–73, 76–96, 115–135, and 141–161; these read MGFI…SILF, KYGA…AILD, YIDP…IGHI, VVFG…AFVF, and VSLA…EGDF.

Belongs to the PlsY family. In terms of assembly, probably interacts with PlsX.

It is found in the cell inner membrane. The catalysed reaction is an acyl phosphate + sn-glycerol 3-phosphate = a 1-acyl-sn-glycero-3-phosphate + phosphate. It participates in lipid metabolism; phospholipid metabolism. Functionally, catalyzes the transfer of an acyl group from acyl-phosphate (acyl-PO(4)) to glycerol-3-phosphate (G3P) to form lysophosphatidic acid (LPA). This enzyme utilizes acyl-phosphate as fatty acyl donor, but not acyl-CoA or acyl-ACP. In Hydrogenobaculum sp. (strain Y04AAS1), this protein is Glycerol-3-phosphate acyltransferase.